The following is a 648-amino-acid chain: ATPase family AAA domain-containing protein 3B (648 aa).

Disordered stretches follow at residues 1–54 and 111–134; these read MSWL…DPTG and QAEE…QYQD. Serine 2 carries the N-acetylserine modification. The Mitochondrial intermembrane segment spans residues 2–246; it reads SWLFGVNKGP…FRAFVTDRDK (245 aa). Residues 17–26 are compositionally biased toward pro residues; it reads GPPPPLPPAQ. Composition is skewed to basic and acidic residues over residues 32 to 48 and 111 to 125; these read GGDR…DKWS and QAEE…ETRQ. The stretch at 69–214 forms a coiled coil; that stretch reads RYAKEALNLA…DIIREQIRLK (146 aa). Positions 247 to 264 form an intramembrane region, helical; that stretch reads VTATVAGLTLLAVGVYSA. Over 265–648 the chain is Mitochondrial intermembrane; the sequence is KNATAVTGRF…PFCPPGHPLL (384 aa). 352 to 359 contacts ATP; it reads GPPGTGKT. 2 positions are modified to N6-acetyllysine: lysine 427 and lysine 495.

The protein belongs to the AAA ATPase family. Forms heterooligomers with ATAD3A. Interacts with components of the mitochondrial ribosome, including MRPL11 and MRPS18B, and with other proteins involved in mitochondrial RNA metabolism, possibly via interaction with ATAD3A. Interacts with GADD45GIP1. As to expression, tends to be down-regulated in differentiated cells and re-expressed in pluripotent stem cells or cancer cells (at protein level).

The protein localises to the mitochondrion inner membrane. In terms of biological role, may play a role in a mitochondrial network organization typical for stem cells, characterized by reduced mitochondrial metabolism, low mtDNA copies and fragmentated mitochondrial network. May act by suppressing ATAD3A function, interfering with ATAD3A interaction with matrix nucleoid complexes. This Homo sapiens (Human) protein is ATPase family AAA domain-containing protein 3B (ATAD3B).